Here is a 158-residue protein sequence, read N- to C-terminus: 2-C-methyl-D-erythritol 2,4-cyclodiphosphate synthase (158 aa).

2 residues coordinate a divalent metal cation: Asp-9 and His-11. Residues 9-11 (DAH) and 35-36 (HS) each bind 4-CDP-2-C-methyl-D-erythritol 2-phosphate. His-43 is a binding site for a divalent metal cation. 4-CDP-2-C-methyl-D-erythritol 2-phosphate contacts are provided by residues 57-59 (DIG), 62-66 (FPDTD), 133-136 (TTTE), Phe-140, and Arg-143.

It belongs to the IspF family. Homotrimer. Requires a divalent metal cation as cofactor.

It carries out the reaction 4-CDP-2-C-methyl-D-erythritol 2-phosphate = 2-C-methyl-D-erythritol 2,4-cyclic diphosphate + CMP. It participates in isoprenoid biosynthesis; isopentenyl diphosphate biosynthesis via DXP pathway; isopentenyl diphosphate from 1-deoxy-D-xylulose 5-phosphate: step 4/6. In terms of biological role, involved in the biosynthesis of isopentenyl diphosphate (IPP) and dimethylallyl diphosphate (DMAPP), two major building blocks of isoprenoid compounds. Catalyzes the conversion of 4-diphosphocytidyl-2-C-methyl-D-erythritol 2-phosphate (CDP-ME2P) to 2-C-methyl-D-erythritol 2,4-cyclodiphosphate (ME-CPP) with a corresponding release of cytidine 5-monophosphate (CMP). The protein is 2-C-methyl-D-erythritol 2,4-cyclodiphosphate synthase of Methylococcus capsulatus (strain ATCC 33009 / NCIMB 11132 / Bath).